Reading from the N-terminus, the 464-residue chain is ATP synthase subunit beta (464 aa).

153–160 (GGAGVGKT) serves as a coordination point for ATP.

It belongs to the ATPase alpha/beta chains family. As to quaternary structure, F-type ATPases have 2 components, CF(1) - the catalytic core - and CF(0) - the membrane proton channel. CF(1) has five subunits: alpha(3), beta(3), gamma(1), delta(1), epsilon(1). CF(0) has three main subunits: a(1), b(2) and c(9-12). The alpha and beta chains form an alternating ring which encloses part of the gamma chain. CF(1) is attached to CF(0) by a central stalk formed by the gamma and epsilon chains, while a peripheral stalk is formed by the delta and b chains.

Its subcellular location is the cell membrane. It carries out the reaction ATP + H2O + 4 H(+)(in) = ADP + phosphate + 5 H(+)(out). Its function is as follows. Produces ATP from ADP in the presence of a proton gradient across the membrane. The catalytic sites are hosted primarily by the beta subunits. This Clostridium novyi (strain NT) protein is ATP synthase subunit beta.